Reading from the N-terminus, the 209-residue chain is Transcription antitermination protein NusB (209 aa).

The protein belongs to the NusB family.

Functionally, involved in transcription antitermination. Required for transcription of ribosomal RNA (rRNA) genes. Binds specifically to the boxA antiterminator sequence of the ribosomal RNA (rrn) operons. This chain is Transcription antitermination protein NusB, found in Cyanothece sp. (strain PCC 7425 / ATCC 29141).